The following is a 619-amino-acid chain: Chaperone protein HscA homolog (619 aa).

The protein belongs to the heat shock protein 70 family.

In terms of biological role, chaperone involved in the maturation of iron-sulfur cluster-containing proteins. Has a low intrinsic ATPase activity which is markedly stimulated by HscB. In Laribacter hongkongensis (strain HLHK9), this protein is Chaperone protein HscA homolog.